We begin with the raw amino-acid sequence, 138 residues long: UPF0047 protein YjbQ (138 aa).

The protein belongs to the UPF0047 family.

This Escherichia coli O157:H7 protein is UPF0047 protein YjbQ (yjbQ).